Consider the following 238-residue polypeptide: LexA repressor (238 aa).

Positions 26 to 46 (FDEMKDALDLRSKSGIHRLIT) form a DNA-binding region, H-T-H motif. Residues S159 and K197 each act as for autocatalytic cleavage activity in the active site.

It belongs to the peptidase S24 family. In terms of assembly, homodimer.

The enzyme catalyses Hydrolysis of Ala-|-Gly bond in repressor LexA.. Its function is as follows. Represses a number of genes involved in the response to DNA damage (SOS response), including recA and lexA. In the presence of single-stranded DNA, RecA interacts with LexA causing an autocatalytic cleavage which disrupts the DNA-binding part of LexA, leading to derepression of the SOS regulon and eventually DNA repair. This chain is LexA repressor, found in Rhodobacter capsulatus (Rhodopseudomonas capsulata).